A 483-amino-acid chain; its full sequence is V-type proton ATPase subunit H (483 aa).

Ser-483 carries the phosphoserine modification.

Belongs to the V-ATPase H subunit family. As to quaternary structure, V-ATPase is a heteromultimeric enzyme made up of two complexes: the ATP-hydrolytic V1 complex and the proton translocation V0 complex. The V1 complex consists of three catalytic AB heterodimers that form a heterohexamer, three peripheral stalks each consisting of EG heterodimers, one central rotor including subunits D and F, and the regulatory subunits C and H. The proton translocation complex V0 consists of the proton transport subunit a, a ring of proteolipid subunits c9c'', rotary subunit d, subunits e and f, and the accessory subunits ATP6AP1/Ac45 and ATP6AP2/PRR. Interacts with AP2M1. Interacts with TM9SF4 in colon cancer cells. In terms of assembly, (Microbial infection) Interacts with HIV-1 Nef protein. (Microbial infection) Interacts with M.tuberculosis PtpA, which blocks V-ATPase trafficking and phagosome acidification. As to expression, widely expressed.

Its subcellular location is the cytoplasmic vesicle. It is found in the clathrin-coated vesicle membrane. Subunit of the V1 complex of vacuolar(H+)-ATPase (V-ATPase), a multisubunit enzyme composed of a peripheral complex (V1) that hydrolyzes ATP and a membrane integral complex (V0) that translocates protons. V-ATPase is responsible for acidifying and maintaining the pH of intracellular compartments and in some cell types, is targeted to the plasma membrane, where it is responsible for acidifying the extracellular environment. Subunit H is essential for V-ATPase activity, but not for the assembly of the complex. Involved in the endocytosis mediated by clathrin-coated pits, required for the formation of endosomes. The chain is V-type proton ATPase subunit H (ATP6V1H) from Homo sapiens (Human).